The chain runs to 684 residues: uncharacterized protein (684 aa).

In terms of domain architecture, Helicase ATP-binding spans 54–239 (LKYLYNKKDV…LLFNRDFEVV (186 aa)). Residue 67 to 74 (TSTASGKS) participates in ATP binding. The short motif at 181–184 (DELH) is the DEVH box element. The Helicase C-terminal domain occupies 264–419 (LLRRLIENLV…YMPVNIKNRF (156 aa)).

The protein belongs to the helicase family.

This is an uncharacterized protein from Methanocaldococcus jannaschii (strain ATCC 43067 / DSM 2661 / JAL-1 / JCM 10045 / NBRC 100440) (Methanococcus jannaschii).